A 227-amino-acid chain; its full sequence is Aspartyl protease inhibitor (227 aa).

A signal peptide spans Met1 to Ala15. The span at Ser88–Pro109 shows a compositional bias: basic and acidic residues. A disordered region spans residues Ser88–Ser116. A disulfide bond links Cys131 and Cys223.

Belongs to the protease inhibitor I33 family.

It localises to the secreted. Its function is as follows. Aspartyl protease inhibitor. This is Aspartyl protease inhibitor (API) from Ostertagia ostertagi (Brown stomach worm).